We begin with the raw amino-acid sequence, 319 residues long: ATP-dependent 6-phosphofructokinase (319 aa).

Residue Gly11 participates in ATP binding. Residue 21–25 (RAVVR) coordinates ADP. Residues 72-73 (RS) and 102-105 (GDGS) contribute to the ATP site. Position 103 (Asp103) interacts with Mg(2+). 125 to 127 (TID) serves as a coordination point for substrate. Asp127 functions as the Proton acceptor in the catalytic mechanism. Arg154 serves as a coordination point for ADP. Residues Arg162 and 169–171 (MGR) contribute to the substrate site. Residues 185–187 (GAE) and 213–215 (KMH) each bind ADP. Substrate is bound by residues Glu222, Arg243, and 249–252 (HIQR).

This sequence belongs to the phosphofructokinase type A (PFKA) family. ATP-dependent PFK group I subfamily. Prokaryotic clade 'B1' sub-subfamily. As to quaternary structure, homotetramer. It depends on Mg(2+) as a cofactor.

It is found in the cytoplasm. It catalyses the reaction beta-D-fructose 6-phosphate + ATP = beta-D-fructose 1,6-bisphosphate + ADP + H(+). Its pathway is carbohydrate degradation; glycolysis; D-glyceraldehyde 3-phosphate and glycerone phosphate from D-glucose: step 3/4. Allosterically activated by ADP and other diphosphonucleosides, and allosterically inhibited by phosphoenolpyruvate. Functionally, catalyzes the phosphorylation of D-fructose 6-phosphate to fructose 1,6-bisphosphate by ATP, the first committing step of glycolysis. The sequence is that of ATP-dependent 6-phosphofructokinase from Clostridium tetani (strain Massachusetts / E88).